The chain runs to 238 residues: MSLEVIFGSNILLILVAYFIGSINFSIIVSKIFKKSDIREKGSKNAGATNMARNFGFKIGFLVFFLDVSKSFWFAIISAILRDFVPFFGAVITQLVVLFVIIGHVFPIYFKFKGGKGAATNLGMIASLNIILAIIGGIIFFAMIFRWKIVSLGSFITPFILVIFMIIPWMNSSIIAYVGYSDFYQPVRESFQGAWYLSSLFLFLAALIILFTHIPNIKKLIKKEESVLKFSKKSKKLA.

The next 6 membrane-spanning stretches (helical) occupy residues Val5–Phe25, Phe61–Leu81, Phe88–Ile108, Ile125–Phe145, Ile149–Trp169, and Ala194–Ile214.

The protein belongs to the PlsY family. In terms of assembly, probably interacts with PlsX.

The protein resides in the cell membrane. It carries out the reaction an acyl phosphate + sn-glycerol 3-phosphate = a 1-acyl-sn-glycero-3-phosphate + phosphate. It participates in lipid metabolism; phospholipid metabolism. Functionally, catalyzes the transfer of an acyl group from acyl-phosphate (acyl-PO(4)) to glycerol-3-phosphate (G3P) to form lysophosphatidic acid (LPA). This enzyme utilizes acyl-phosphate as fatty acyl donor, but not acyl-CoA or acyl-ACP. In Mycoplasma mobile (strain ATCC 43663 / 163K / NCTC 11711) (Mesomycoplasma mobile), this protein is Glycerol-3-phosphate acyltransferase.